The sequence spans 57 residues: Light-harvesting protein B-808/866 alpha chain (57 aa).

Methionine 1 carries the N-formylmethionine modification. Residues 1–10 are Cytoplasmic-facing; that stretch reads MQPRSPVRTN. The helical transmembrane segment at 11–30 threads the bilayer; sequence IVIFTILGFVVALLIHFIVL. Position 26 (histidine 26) interacts with a bacteriochlorophyll. Topologically, residues 31-57 are periplasmic; it reads SSPEYNWLSNAEGGALLLSAARALFGI.

This sequence belongs to the antenna complex alpha subunit family. The core complex is formed by different alpha and beta chains, binding bacteriochlorophyll molecules, and arranged most probably in tetrameric structures disposed around the reaction center. The non-pigmented gamma chains may constitute additional components.

It is found in the cell membrane. Antenna complexes are light-harvesting systems, which transfer the excitation energy to the reaction centers. The protein is Light-harvesting protein B-808/866 alpha chain (puf2A) of Chloroflexus aurantiacus (strain ATCC 29366 / DSM 635 / J-10-fl).